The sequence spans 422 residues: MERLTSPPRLMIVSDLDHTMVDHHDPENLSLLRFNSLWEHAYRHDSLLVFSTGRSPTLYKELRKEKPLLTPDITIMSVGTEITYGNSMVPDHGWVEALNNKWDLGIVKQEASNFPELKLQAETEQRPHKVSFYVEKSKAQEVTKELSQRFLKRGLDVKIIYSGGMDLDILPQGAGKGQALAYLLKKLKTEGKLPVNTLACGDSGNDAELFSIPDVYGVMVSNAQEELLKWHAENAKDNPKVIHAKERCAGGIIQAIGHFKLGPNLSPRDVSDFLEIKVENVNPGHEVVKFFLFYERWRRGEVENSEAYTASLKASVHPGGVFVHPSGTEKSLRDTIDELRKYHGDKQGKKFRVWADQVLATDTTPGTWIVKLDKWEQDGDERRCCTTTVKFTSKEGEGLVWEHVQQTWSKETMVKDDSSWII.

Belongs to the sucrose phosphatase family. In terms of assembly, homodimer. Mg(2+) serves as cofactor.

The enzyme catalyses sucrose 6(F)-phosphate + H2O = sucrose + phosphate. The protein operates within glycan biosynthesis; sucrose biosynthesis; sucrose from D-fructose 6-phosphate and UDP-alpha-D-glucose: step 2/2. Catalyzes the final step of sucrose synthesis. The chain is Probable sucrose-phosphatase 2 (SPP2) from Arabidopsis thaliana (Mouse-ear cress).